The chain runs to 429 residues: UDP-N-acetylglucosamine 1-carboxyvinyltransferase (429 aa).

A phosphoenolpyruvate-binding site is contributed by 22–23 (KN). Residue Arg102 participates in UDP-N-acetyl-alpha-D-glucosamine binding. Cys126 serves as the catalytic Proton donor. Position 126 is a 2-(S-cysteinyl)pyruvic acid O-phosphothioketal (Cys126). UDP-N-acetyl-alpha-D-glucosamine-binding positions include 171–174 (KVSV), Asp316, and Ile338.

The protein belongs to the EPSP synthase family. MurA subfamily.

The protein resides in the cytoplasm. It catalyses the reaction phosphoenolpyruvate + UDP-N-acetyl-alpha-D-glucosamine = UDP-N-acetyl-3-O-(1-carboxyvinyl)-alpha-D-glucosamine + phosphate. It functions in the pathway cell wall biogenesis; peptidoglycan biosynthesis. Functionally, cell wall formation. Adds enolpyruvyl to UDP-N-acetylglucosamine. This is UDP-N-acetylglucosamine 1-carboxyvinyltransferase from Xanthobacter autotrophicus (strain ATCC BAA-1158 / Py2).